A 258-amino-acid polypeptide reads, in one-letter code: Ribose-5-phosphate isomerase (258 aa).

It belongs to the ribose 5-phosphate isomerase family.

Its subcellular location is the cytoplasm. It carries out the reaction aldehydo-D-ribose 5-phosphate = D-ribulose 5-phosphate. It participates in carbohydrate degradation; pentose phosphate pathway; D-ribose 5-phosphate from D-ribulose 5-phosphate (non-oxidative stage): step 1/1. In Saccharomyces cerevisiae (strain YJM789) (Baker's yeast), this protein is Ribose-5-phosphate isomerase (RKI1).